The sequence spans 227 residues: MGDNYSTYLLDIEGTVCPISFVKETLFPYFTNKVPQLVQQDTRDSPVSNILSQFHIDDKEQLQAHILELVAKDVKDPILKQLQGYVWAQGYESGQIKAPVYADAIDFIKRKKRVFIYSSGSVKAQKLLFGYVQDPNAPAHDSLDLNSYIDGYFDINTSGKKTETQSYANILRDIGAKASEVLFLSDNPLELDAAAGVGIATGLASRPGNAPVPDGQKYQVYKNFETL.

Asp-11 and Glu-13 together coordinate Mg(2+). Substrate contacts are provided by residues 118–119 (SS) and Lys-161. Mg(2+) is bound at residue Asp-186.

This sequence belongs to the HAD-like hydrolase superfamily. MasA/MtnC family. As to quaternary structure, monomer. Requires Mg(2+) as cofactor.

Its subcellular location is the cytoplasm. It is found in the nucleus. The enzyme catalyses 5-methylsulfanyl-2,3-dioxopentyl phosphate + H2O = 1,2-dihydroxy-5-(methylsulfanyl)pent-1-en-3-one + phosphate. Its pathway is amino-acid biosynthesis; L-methionine biosynthesis via salvage pathway; L-methionine from S-methyl-5-thio-alpha-D-ribose 1-phosphate: step 3/6. It functions in the pathway amino-acid biosynthesis; L-methionine biosynthesis via salvage pathway; L-methionine from S-methyl-5-thio-alpha-D-ribose 1-phosphate: step 4/6. Bifunctional enzyme that catalyzes the enolization of 2,3-diketo-5-methylthiopentyl-1-phosphate (DK-MTP-1-P) into the intermediate 2-hydroxy-3-keto-5-methylthiopentenyl-1-phosphate (HK-MTPenyl-1-P), which is then dephosphorylated to form the acireductone 1,2-dihydroxy-3-keto-5-methylthiopentene (DHK-MTPene). This chain is Enolase-phosphatase E1, found in Saccharomyces cerevisiae (strain YJM789) (Baker's yeast).